Here is a 79-residue protein sequence, read N- to C-terminus: MNNNIIHYTLDTLGLRCPEPVMLVRKQIRHMQNGEMLLVIADDPATTRDIPGFCQFMEHTLVRAEMERPPFRYWVKKGK.

Cysteine 17 (cysteine persulfide intermediate) is an active-site residue.

Belongs to the sulfur carrier protein TusA family.

The protein resides in the cytoplasm. Its function is as follows. Sulfur carrier protein which probably makes part of a sulfur-relay system. This is Sulfur carrier protein TusA from Actinobacillus succinogenes (strain ATCC 55618 / DSM 22257 / CCUG 43843 / 130Z).